The sequence spans 192 residues: MTSSSGSLKLEIHTDDKTPGKWSVPLGDDVFRRFLSGGGGSEKAVFGEGSLFSPFLFGKYFDPSDAFPLWEFEAEVLLASLRSLGQCRVDWSQTDQAYVLKSDIPVVGKNNVQVYVDINGRVMEISGQWNSNKKAATNSDWRSGRWWEHGYVRRLELPSDADAKYSEAFLSNNDDYSFLEIRIPKINSKNKF.

The sHSP domain maps to 80 to 192 (SLRSLGQCRV…IPKINSKNKF (113 aa)).

Belongs to the small heat shock protein (HSP20) family. In terms of assembly, may form oligomeric structures.

The protein localises to the cytoplasm. The protein is 21.7 kDa class VI heat shock protein (HSP21.7) of Arabidopsis thaliana (Mouse-ear cress).